The following is a 508-amino-acid chain: MVIIWNIFLPAFLLVLAKASLRSSRDSANCKLNKKQSQLNSFLWTIKRDPPSYFFGTIHVPYTRVWDFIPENSKTAFQQSNIVYFELDLTDPYTISALTSCQMLPQGENLQNVLPRDIYRRLKRHLEYVKLMMPSWMTPDQRGKGLYADYLFNAIAGNWERKRPVWVMLMVNSLTEVDIKSRGVPVLDLYLAQEAERLKKRTGAVEQVEEQCHPLNGLNLSQVIFALNQTLLQQENLRAGSVQVPYSTEDLIKHYNCGDLNSIIFNHDSSQVPNFINSTLPPQERITAQEIDNYFRQELIYKRNERMGKRVKDLLEQFPEKSFFFAFGAGHFLGNNTVIDVLKRYGYDVLHTPAGRSIINNGKGKKNLLPSKFSSSSLPVGLSAPPCTVTSRIKQSINSHKDQESLPDILLDDDIDQLDKDERKYKKRKQRKEKHRHFSDLWVRIQESSTDTTPQIRIINGYITVEPHPREHGKDKYIKAAQSVSFSLSIPSAFLLLAWCFQQVAVLQ.

Residues 1-23 form the signal peptide; the sequence is MVIIWNIFLPAFLLVLAKASLRS. Residues 24–485 lie on the Extracellular side of the membrane; the sequence is SRDSANCKLN…KYIKAAQSVS (462 aa). 4 N-linked (GlcNAc...) asparagine glycosylation sites follow: N219, N228, N277, and N335. A helical transmembrane segment spans residues 486–506; that stretch reads FSLSIPSAFLLLAWCFQQVAV. Over 507-508 the chain is Cytoplasmic; sequence LQ.

This sequence belongs to the TIKI family. It depends on Mn(2+) as a cofactor. Requires Co(2+) as cofactor. Zygotically expressed in the Spemann-Mangold organizer, in particular in the head Spemann-Mangold organizer region responsible for anterior patterning.

The protein resides in the cell membrane. Its function is as follows. Metalloprotease that acts as a negative regulator of the Wnt signaling pathway: expressed in the Spemann-Mangold organizer and is required for anterior-neural patterning in head formation in embryos. Acts by mediating the cleavage of the N-terminal residues of a subset of Wnt proteins. Following cleavage, Wnt proteins become oxidized and form large disulfide-bond oligomers, leading to their inactivation. Able to cleave wnt8. The chain is Metalloprotease TIKI1 (trabd2a) from Xenopus tropicalis (Western clawed frog).